The chain runs to 217 residues: Octanoyltransferase (217 aa).

The BPL/LPL catalytic domain maps to 35 to 214; that stretch reads DEAGERIWLL…TLPAFLDKLR (180 aa). Residues 73–80, 145–147, and 158–160 contribute to the substrate site; these read RGGRYTYH, AIG, and GFS. Cys176 acts as the Acyl-thioester intermediate in catalysis.

It belongs to the LipB family.

It is found in the cytoplasm. The enzyme catalyses octanoyl-[ACP] + L-lysyl-[protein] = N(6)-octanoyl-L-lysyl-[protein] + holo-[ACP] + H(+). It participates in protein modification; protein lipoylation via endogenous pathway; protein N(6)-(lipoyl)lysine from octanoyl-[acyl-carrier-protein]: step 1/2. Functionally, catalyzes the transfer of endogenously produced octanoic acid from octanoyl-acyl-carrier-protein onto the lipoyl domains of lipoate-dependent enzymes. Lipoyl-ACP can also act as a substrate although octanoyl-ACP is likely to be the physiological substrate. The protein is Octanoyltransferase of Sphingopyxis alaskensis (strain DSM 13593 / LMG 18877 / RB2256) (Sphingomonas alaskensis).